The following is a 113-amino-acid chain: Small ribosomal subunit protein uS15 (113 aa).

Belongs to the universal ribosomal protein uS15 family. In terms of assembly, part of the 30S ribosomal subunit. Forms a bridge to the 50S subunit in the 70S ribosome, contacting the 23S rRNA.

One of the primary rRNA binding proteins, it binds directly to 16S rRNA where it helps nucleate assembly of the platform of the 30S subunit by binding and bridging several RNA helices of the 16S rRNA. Its function is as follows. Forms an intersubunit bridge (bridge B4) with the 23S rRNA of the 50S subunit in the ribosome. This Haemophilus influenzae (strain PittEE) protein is Small ribosomal subunit protein uS15.